Consider the following 218-residue polypeptide: 3,4-dihydroxy-2-butanone 4-phosphate synthase (218 aa).

D-ribulose 5-phosphate-binding positions include 38 to 39 (RE), Asp43, 151 to 155 (RRGHT), and Glu175. Glu39 is a Mg(2+) binding site. Residues 125–151 (PHAKPEDLARPGHVFPLRARPGGVMTR) are disordered. Residue His154 participates in Mg(2+) binding.

The protein belongs to the DHBP synthase family. In terms of assembly, homodimer. Requires Mg(2+) as cofactor. It depends on Mn(2+) as a cofactor.

The catalysed reaction is D-ribulose 5-phosphate = (2S)-2-hydroxy-3-oxobutyl phosphate + formate + H(+). Its pathway is cofactor biosynthesis; riboflavin biosynthesis; 2-hydroxy-3-oxobutyl phosphate from D-ribulose 5-phosphate: step 1/1. In terms of biological role, catalyzes the conversion of D-ribulose 5-phosphate to formate and 3,4-dihydroxy-2-butanone 4-phosphate. This Vibrio parahaemolyticus serotype O3:K6 (strain RIMD 2210633) protein is 3,4-dihydroxy-2-butanone 4-phosphate synthase.